We begin with the raw amino-acid sequence, 292 residues long: MPTLKDIRIRLKGVKSTQQVTKAMKMVAAAKLRRAQDRAIQARPYAGKLKEMLASLSTKVDTSVNPLLSPREEVNNVLVILVTSDRGLCGGFNANIIKMAQRLIHEEYAALHAKGGVTMICAGTKGTEFFRKRGYKLAAAYPGVFQNLSFDSAREIADKASKMYLSGEVDRVVLVYNEFKSVLAPNLRTEQLLPITPEGGDAKTASSEYLYEPSPAAIIDELVPKHLNTQLWRVMLESNAAEQAARMAAMDSATENAKELIRVLNISYNRARQAAITKELSEIVAGADALKQ.

Belongs to the ATPase gamma chain family. In terms of assembly, F-type ATPases have 2 components, CF(1) - the catalytic core - and CF(0) - the membrane proton channel. CF(1) has five subunits: alpha(3), beta(3), gamma(1), delta(1), epsilon(1). CF(0) has three main subunits: a, b and c.

The protein localises to the cell inner membrane. In terms of biological role, produces ATP from ADP in the presence of a proton gradient across the membrane. The gamma chain is believed to be important in regulating ATPase activity and the flow of protons through the CF(0) complex. The sequence is that of ATP synthase gamma chain from Chlorobaculum tepidum (strain ATCC 49652 / DSM 12025 / NBRC 103806 / TLS) (Chlorobium tepidum).